Consider the following 75-residue polypeptide: Exodeoxyribonuclease 7 small subunit (75 aa).

It belongs to the XseB family. As to quaternary structure, heterooligomer composed of large and small subunits.

It localises to the cytoplasm. The enzyme catalyses Exonucleolytic cleavage in either 5'- to 3'- or 3'- to 5'-direction to yield nucleoside 5'-phosphates.. Functionally, bidirectionally degrades single-stranded DNA into large acid-insoluble oligonucleotides, which are then degraded further into small acid-soluble oligonucleotides. This Chlamydia abortus (strain DSM 27085 / S26/3) (Chlamydophila abortus) protein is Exodeoxyribonuclease 7 small subunit.